The following is a 311-amino-acid chain: Aspartate carbamoyltransferase catalytic subunit (311 aa).

The carbamoyl phosphate site is built by R55 and T56. An L-aspartate-binding site is contributed by K85. Positions 106, 135, and 138 each coordinate carbamoyl phosphate. Residues R168 and R230 each coordinate L-aspartate. The carbamoyl phosphate site is built by L268 and P269.

This sequence belongs to the aspartate/ornithine carbamoyltransferase superfamily. ATCase family. As to quaternary structure, heterododecamer (2C3:3R2) of six catalytic PyrB chains organized as two trimers (C3), and six regulatory PyrI chains organized as three dimers (R2).

The enzyme catalyses carbamoyl phosphate + L-aspartate = N-carbamoyl-L-aspartate + phosphate + H(+). Its pathway is pyrimidine metabolism; UMP biosynthesis via de novo pathway; (S)-dihydroorotate from bicarbonate: step 2/3. Its function is as follows. Catalyzes the condensation of carbamoyl phosphate and aspartate to form carbamoyl aspartate and inorganic phosphate, the committed step in the de novo pyrimidine nucleotide biosynthesis pathway. This Yersinia pseudotuberculosis serotype IB (strain PB1/+) protein is Aspartate carbamoyltransferase catalytic subunit.